Reading from the N-terminus, the 367-residue chain is Heparan sulfate glucosamine 3-O-sulfotransferase 2 (367 aa).

The Cytoplasmic portion of the chain corresponds to 1 to 19; it reads MAYRVLGRAGPPQPRRARR. A helical; Signal-anchor for type II membrane protein membrane pass occupies residues 20–39; the sequence is LLFAFTLSLSCTYLCYSFLC. Topologically, residues 40-367 are lumenal; that stretch reads CCDDLGRSRL…ETVGQDFRWE (328 aa). The interval 61 to 110 is disordered; it reads AGGQKLLQKSRPCDPSGPTPSEPSAPSAPAAAVPAPRLSGSNHSGSPKLG. Residues 84-96 are compositionally biased toward low complexity; sequence SAPSAPAAAVPAP. N-linked (GlcNAc...) asparagine glycosylation occurs at Asn-102. 124 to 128 contributes to the 3'-phosphoadenylyl sulfate binding site; the sequence is KGGTR. Substrate is bound by residues 146 to 152 and 177 to 180; these read EPHFFDR and KTPS. An N-linked (GlcNAc...) asparagine glycan is attached at Asn-193. 3'-phosphoadenylyl sulfate contacts are provided by Arg-205 and Ser-213. N-linked (GlcNAc...) asparagine glycosylation is present at Asn-235. Residue 245–246 participates in substrate binding; the sequence is WN. N-linked (GlcNAc...) asparagine glycosylation occurs at Asn-306. Cys-313 and Cys-325 are disulfide-bonded. A 3'-phosphoadenylyl sulfate-binding site is contributed by 330-334; the sequence is KGRTH.

This sequence belongs to the sulfotransferase 1 family. In terms of tissue distribution, highly expressed in the brain and weakly expressed in the heart, placenta, lung and skeletal muscle.

The protein localises to the golgi apparatus membrane. The enzyme catalyses alpha-D-glucosaminyl-[heparan sulfate](n) + 3'-phosphoadenylyl sulfate = 3-sulfo-alpha-D-glucosaminyl-[heparan sulfate](n) + adenosine 3',5'-bisphosphate + H(+). Sulfotransferase that utilizes 3'-phospho-5'-adenylyl sulfate (PAPS) to catalyze the transfer of a sulfo group to an N-unsubstituted glucosamine linked to a 2-O-sulfo iduronic acid unit on heparan sulfate. Catalyzes the O-sulfation of glucosamine in GlcA2S-GlcNS. Unlike HS3ST1/3-OST-1, does not convert non-anticoagulant heparan sulfate to anticoagulant heparan sulfate. The protein is Heparan sulfate glucosamine 3-O-sulfotransferase 2 (HS3ST2) of Homo sapiens (Human).